A 444-amino-acid polypeptide reads, in one-letter code: Phosphoglucosamine mutase (444 aa).

The Phosphoserine intermediate role is filled by Ser-102. Positions 102, 241, 243, and 245 each coordinate Mg(2+). At Ser-102 the chain carries Phosphoserine.

This sequence belongs to the phosphohexose mutase family. Mg(2+) is required as a cofactor. Post-translationally, activated by phosphorylation.

The catalysed reaction is alpha-D-glucosamine 1-phosphate = D-glucosamine 6-phosphate. Catalyzes the conversion of glucosamine-6-phosphate to glucosamine-1-phosphate. The polypeptide is Phosphoglucosamine mutase (Erwinia tasmaniensis (strain DSM 17950 / CFBP 7177 / CIP 109463 / NCPPB 4357 / Et1/99)).